Reading from the N-terminus, the 274-residue chain is NAD kinase (274 aa).

Residue aspartate 61 is the Proton acceptor of the active site. Residues 61–62 (DG), lysine 66, 134–135 (ND), lysine 145, aspartate 164, and 175–180 (TAYSLS) each bind NAD(+).

The protein belongs to the NAD kinase family. It depends on a divalent metal cation as a cofactor.

The protein localises to the cytoplasm. The enzyme catalyses NAD(+) + ATP = ADP + NADP(+) + H(+). Involved in the regulation of the intracellular balance of NAD and NADP, and is a key enzyme in the biosynthesis of NADP. Catalyzes specifically the phosphorylation on 2'-hydroxyl of the adenosine moiety of NAD to yield NADP. This chain is NAD kinase, found in Clostridium tetani (strain Massachusetts / E88).